Consider the following 96-residue polypeptide: uncharacterized protein (96 aa).

A helical transmembrane segment spans residues 13–35; that stretch reads PVVRYVVALLHWLLWRVVVIIAI.

The protein localises to the membrane. This is an uncharacterized protein from Archaeoglobus fulgidus (strain ATCC 49558 / DSM 4304 / JCM 9628 / NBRC 100126 / VC-16).